The sequence spans 195 residues: Imidazoleglycerol-phosphate dehydratase (195 aa).

This sequence belongs to the imidazoleglycerol-phosphate dehydratase family.

The protein resides in the cytoplasm. It catalyses the reaction D-erythro-1-(imidazol-4-yl)glycerol 3-phosphate = 3-(imidazol-4-yl)-2-oxopropyl phosphate + H2O. The protein operates within amino-acid biosynthesis; L-histidine biosynthesis; L-histidine from 5-phospho-alpha-D-ribose 1-diphosphate: step 6/9. This chain is Imidazoleglycerol-phosphate dehydratase, found in Burkholderia multivorans (strain ATCC 17616 / 249).